Consider the following 100-residue polypeptide: Integration host factor subunit alpha (100 aa).

Belongs to the bacterial histone-like protein family. As to quaternary structure, heterodimer of an alpha and a beta chain.

Its function is as follows. This protein is one of the two subunits of integration host factor, a specific DNA-binding protein that functions in genetic recombination as well as in transcriptional and translational control. The protein is Integration host factor subunit alpha of Rhizorhabdus wittichii (strain DSM 6014 / CCUG 31198 / JCM 15750 / NBRC 105917 / EY 4224 / RW1) (Sphingomonas wittichii).